The sequence spans 1036 residues: MGRTIRRRRSNSSLSEAISVSLGINQDSSVNKMHRASVSAMSPPLCRSYMSGFFTGGNSPMINNLSDSKLPISNKQHPKVIHGSENLHRQTAQLSNEFCSSSVEENSPTIKDYMDIIGNGDRKDDQSMRTIEENIDEEYSDEYSRLLLSPASSNVDDDRNRGLQNSSLPELEDGYAGGYQSLRPSHNLRFRPRNLWHMCTSFPSKFAHYLPAAVLGLLLNILDALSYGMIIFPITEPVFSHLGPTGISMFYISTIISQAVYSGGWSSFPSGIGSEMIEITPFYHTMALAIKEALAGNDDEIITTTIFCYVISSMLTGVVFYALGKLRLGKIVGFFPRHILIGCIGGVGYFLIITGIEVTTRVAKFEYSWPFFSGLFTDYDTLAKWLLPVLLTVVLIGTQRYFKNSLVLPSFYILTLVLFHFIVAIIPTLSLDALRQAGWIFPIANSDSKWYDHYRLFNVHKVHWSLVLQQIPTMMALTFFGILHVPINVPALAMSLQMDKYDVDRELIAHGYSNFFSGLLGSVQNYLVYTNSVLFIRAGADSPFAGFLLIALTICIMIIGPVIISFIPICIVGSLIFLLGYELLVEALVDTWNKLNRFEYLTVVIIVFTMGIFDFVLGIIVGILIACFSFLVDSTKLQTINGEYNGNVARSTVYRDYVQTKFLDGIGEQIYVLKLQNLLFFGTIISIEEKIERLLQISNKDATKRRIKYLILDFKNINADNIDYSAAEGFNRIKRFTETKRIKLIISSIKERDRIYNAFNNVGLLNDVELFADLNSALEWCENEFLFQYKQLRKKAKERLEEGKQNNVVSAVIAATKNKKIDTIGNGLNRGSNGDTARNLMSLPTNTPRNYQILSVAQNVFVNDEQAVKNFKKEYKDDEPVLPILLFALKQYRPDIISEVQKVREKEIKFWAQLCPYFTRRRLASQSHLLHADNIFFLVETGMLKATYELPQGTLYEIFSNGTCFGKIIAPGNAMPREQKLTIETETDSVLWVIDSSSLNKLKEDNLALYVEVALMVMCIKDTRFKELLGYTLVSA.

Residues 1–213 are Vacuolar-facing; the sequence is MGRTIRRRRS…SKFAHYLPAA (213 aa). Phosphoserine occurs at positions 42 and 127. Thr-130 is modified (phosphothreonine). Phosphoserine occurs at positions 140, 144, 149, 152, and 153. Residues 214–234 traverse the membrane as a helical segment; it reads VLGLLLNILDALSYGMIIFPI. The Cytoplasmic segment spans residues 235 to 236; that stretch reads TE. The chain crosses the membrane as a helical span at residues 237–257; that stretch reads PVFSHLGPTGISMFYISTIIS. Over 258 to 269 the chain is Vacuolar; that stretch reads QAVYSGGWSSFP. A helical transmembrane segment spans residues 270 to 290; it reads SGIGSEMIEITPFYHTMALAI. Topologically, residues 291 to 300 are cytoplasmic; the sequence is KEALAGNDDE. A helical membrane pass occupies residues 301 to 321; it reads IITTTIFCYVISSMLTGVVFY. Over 322–338 the chain is Vacuolar; sequence ALGKLRLGKIVGFFPRH. The chain crosses the membrane as a helical span at residues 339 to 359; sequence ILIGCIGGVGYFLIITGIEVT. Residues 360–375 are Cytoplasmic-facing; it reads TRVAKFEYSWPFFSGL. Residues 376-396 form a helical membrane-spanning segment; the sequence is FTDYDTLAKWLLPVLLTVVLI. At 397–405 the chain is on the vacuolar side; the sequence is GTQRYFKNS. The chain crosses the membrane as a helical span at residues 406–426; the sequence is LVLPSFYILTLVLFHFIVAII. Topologically, residues 427–473 are cytoplasmic; it reads PTLSLDALRQAGWIFPIANSDSKWYDHYRLFNVHKVHWSLVLQQIPT. Residues 474–494 form a helical membrane-spanning segment; the sequence is MMALTFFGILHVPINVPALAM. The Vacuolar portion of the chain corresponds to 495–515; it reads SLQMDKYDVDRELIAHGYSNF. A helical membrane pass occupies residues 516–536; it reads FSGLLGSVQNYLVYTNSVLFI. The Cytoplasmic segment spans residues 537-546; the sequence is RAGADSPFAG. Residues 547 to 567 form a helical membrane-spanning segment; it reads FLLIALTICIMIIGPVIISFI. Pro-568 is a topological domain (vacuolar). The chain crosses the membrane as a helical span at residues 569-589; that stretch reads ICIVGSLIFLLGYELLVEALV. Residues 590–604 are Cytoplasmic-facing; sequence DTWNKLNRFEYLTVV. The helical transmembrane segment at 605-625 threads the bilayer; that stretch reads IIVFTMGIFDFVLGIIVGILI. Residues 626-664 lie on the Vacuolar side of the membrane; that stretch reads ACFSFLVDSTKLQTINGEYNGNVARSTVYRDYVQTKFLD. An STAS domain is found at 660-781; sequence TKFLDGIGEQ…ADLNSALEWC (122 aa). Residues 665–685 traverse the membrane as a helical segment; that stretch reads GIGEQIYVLKLQNLLFFGTII. The Cytoplasmic portion of the chain corresponds to 686 to 1036; that stretch reads SIEEKIERLL…ELLGYTLVSA (351 aa). A Phosphoserine modification is found at Ser-842. Position 847 is a phosphothreonine (Thr-847).

The protein resides in the vacuole membrane. Its function is as follows. Amino acid transporter involved in vacuolar uptake of basic amino acids for storage during nitrogen replete condititions. May function as an amino acid/proton antiporter. The polypeptide is Vacuolar basic amino acid transporter VSB1 (Saccharomyces cerevisiae (strain ATCC 204508 / S288c) (Baker's yeast)).